Consider the following 204-residue polypeptide: Fluoride-specific ion channel FluC 3 (204 aa).

The segment covering 1 to 16 has biased composition (basic and acidic residues); sequence MRADESGPERESREPT. Positions 1-53 are disordered; sequence MRADESGPERESREPTHIPGAEPELGGEPTPRGEPGPGFEPGPGGEPAPSRAP. Over residues 32-46 the composition is skewed to pro residues; sequence RGEPGPGFEPGPGGE. 4 consecutive transmembrane segments (helical) span residues 62 to 82, 96 to 116, 125 to 145, and 158 to 178; these read VLAA…ALGL, FAVN…VLEI, PFAA…MVDT, and AFNV…GLAI. Na(+)-binding residues include G133 and T136.

This sequence belongs to the fluoride channel Fluc/FEX (TC 1.A.43) family.

It is found in the cell membrane. The catalysed reaction is fluoride(in) = fluoride(out). Its activity is regulated as follows. Na(+) is not transported, but it plays an essential structural role and its presence is essential for fluoride channel function. Functionally, fluoride-specific ion channel. Important for reducing fluoride concentration in the cell, thus reducing its toxicity. The polypeptide is Fluoride-specific ion channel FluC 3 (Streptomyces avermitilis (strain ATCC 31267 / DSM 46492 / JCM 5070 / NBRC 14893 / NCIMB 12804 / NRRL 8165 / MA-4680)).